The sequence spans 37 residues: Large ribosomal subunit protein bL36 (37 aa).

Belongs to the bacterial ribosomal protein bL36 family.

In Polaromonas naphthalenivorans (strain CJ2), this protein is Large ribosomal subunit protein bL36.